We begin with the raw amino-acid sequence, 227 residues long: Protein FdhD (227 aa).

Residue 210-215 participates in Mo-bis(molybdopterin guanine dinucleotide) binding; it reads FARNGK.

It belongs to the FdhD family.

It localises to the cytoplasm. In terms of biological role, required for formate dehydrogenase (FDH) activity. The protein is Protein FdhD of Methanocaldococcus jannaschii (strain ATCC 43067 / DSM 2661 / JAL-1 / JCM 10045 / NBRC 100440) (Methanococcus jannaschii).